The chain runs to 599 residues: Nucleoporin p58/p45 (599 aa).

A run of 5 repeats spans residues 7–8 (FG), 30–31 (FG), 44–45 (FG), 63–64 (FG), and 68–69 (FG). The segment at 7-579 (FGSGTLGSTT…VSNPASAGFG (573 aa)) is 14 X 2 AA repeats of F-G. A disordered region spans residues 213 to 247 (NEGLGGIDFSSSSDKKSDKTGTRPEDSKALKDENL). The span at 225–246 (SDKKSDKTGTRPEDSKALKDEN) shows a compositional bias: basic and acidic residues. Coiled coils occupy residues 256-276 (ENLQ…SRMS) and 314-381 (ETAQ…SHIT). Thr-331 carries the post-translational modification Phosphothreonine. 9 consecutive repeat copies span residues 488 to 489 (FG), 492 to 493 (FG), 513 to 514 (FG), 519 to 520 (FG), 529 to 530 (FG), 531 to 532 (FG), 545 to 546 (FG), 568 to 569 (FG), and 578 to 579 (FG). The tract at residues 579-599 (GTGGQLLQLKKPPAGNKRGKR) is disordered.

It belongs to the NUP58 family. In terms of assembly, component of the p62 complex, a complex at least composed of NUP62, NUP54, and NUP58. Interacts with NUTF2. Interacts with SRP1-alpha and Importin p97 proteins when they are together, but not with SRP1-alpha protein alone. Post-translationally, O-glycosylated.

Its subcellular location is the nucleus. The protein localises to the nuclear pore complex. The protein resides in the nucleus membrane. Functionally, component of the nuclear pore complex, a complex required for the trafficking across the nuclear membrane. The polypeptide is Nucleoporin p58/p45 (Homo sapiens (Human)).